We begin with the raw amino-acid sequence, 435 residues long: Amino acid transporter AVT6C (435 aa).

The tract at residues 1 to 24 (MTPQIKTHLLPKQEPSSSENHGSS) is disordered. The next 11 membrane-spanning stretches (helical) occupy residues 28–48 (IVFNVSTSIIGAGIMSMPAAF), 53–73 (IVPAFLIITIIAWLSTISVGF), 100–120 (IAVQIATMVATFGCMIIFSII), 148–168 (WNTRIFALLFVYGFVLLPLVL), 181–201 (VSFLLAVLFVVISSVLAISAL), 219–239 (GSFWQLFTASPVIVTAFTFHF), 260–280 (ISVILCAAIYFATGLFGYLLF), 307–327 (IVRLSYVLHLMLVFPLLNFSL), 354–374 (LALLICCFLSAIAVPDIWYFF), 375–395 (QFMGSTITVSIAFIFPAAIVL), and 408–428 (IVAAIMLVLAVATSIIAISTN).

This sequence belongs to the amino acid/polyamine transporter 2 family. Amino acid/auxin permease (AAAP) (TC 2.A.18.6) subfamily.

It localises to the membrane. This chain is Amino acid transporter AVT6C, found in Arabidopsis thaliana (Mouse-ear cress).